The chain runs to 490 residues: Aspartyl/glutamyl-tRNA(Asn/Gln) amidotransferase subunit B (490 aa).

The protein belongs to the GatB/GatE family. GatB subfamily. In terms of assembly, heterotrimer of A, B and C subunits.

It carries out the reaction L-glutamyl-tRNA(Gln) + L-glutamine + ATP + H2O = L-glutaminyl-tRNA(Gln) + L-glutamate + ADP + phosphate + H(+). The catalysed reaction is L-aspartyl-tRNA(Asn) + L-glutamine + ATP + H2O = L-asparaginyl-tRNA(Asn) + L-glutamate + ADP + phosphate + 2 H(+). Functionally, allows the formation of correctly charged Asn-tRNA(Asn) or Gln-tRNA(Gln) through the transamidation of misacylated Asp-tRNA(Asn) or Glu-tRNA(Gln) in organisms which lack either or both of asparaginyl-tRNA or glutaminyl-tRNA synthetases. The reaction takes place in the presence of glutamine and ATP through an activated phospho-Asp-tRNA(Asn) or phospho-Glu-tRNA(Gln). The polypeptide is Aspartyl/glutamyl-tRNA(Asn/Gln) amidotransferase subunit B (Methylobacterium radiotolerans (strain ATCC 27329 / DSM 1819 / JCM 2831 / NBRC 15690 / NCIMB 10815 / 0-1)).